A 502-amino-acid chain; its full sequence is ATP synthase subunit alpha 1/3 (502 aa).

169–176 provides a ligand contact to ATP; sequence GDRQTGKT.

Belongs to the ATPase alpha/beta chains family. In terms of assembly, F-type ATPases have 2 components, CF(1) - the catalytic core - and CF(0) - the membrane proton channel. CF(1) has five subunits: alpha(3), beta(3), gamma(1), delta(1), epsilon(1). CF(0) has three main subunits: a(1), b(2) and c(9-12). The alpha and beta chains form an alternating ring which encloses part of the gamma chain. CF(1) is attached to CF(0) by a central stalk formed by the gamma and epsilon chains, while a peripheral stalk is formed by the delta and b chains.

Its subcellular location is the cell inner membrane. The catalysed reaction is ATP + H2O + 4 H(+)(in) = ADP + phosphate + 5 H(+)(out). In terms of biological role, produces ATP from ADP in the presence of a proton gradient across the membrane. The alpha chain is a regulatory subunit. The protein is ATP synthase subunit alpha 1/3 of Syntrophotalea carbinolica (strain DSM 2380 / NBRC 103641 / GraBd1) (Pelobacter carbinolicus).